The primary structure comprises 504 residues: MQEAQVDVKVQSTKTLVMSSQYDKEIAAVAHYMHNYHINDRTTYQKARISLLDSLGCAIETVSKSAEVRSLLGPAVPGSKIPNGFRLPGTSYVLSPVEGAFDMGILIRYLDHNDALGGAEWGHPSDNLGAILSVMDWISRSSAAGIFTHNGPPMTMHTLLTATIKAYEIQGCYQLLNAFNIYGIDHVVLVKLASTAAVSWLLGLTEEQTMAAISHVWMDGQPTRVYRSGEDTIPRKGWAAGDACMRAVHIAFLVKHGQPGSPGALTNPRSGFYVKTFGDKGFQFARPFGEWAIRNVYLKTMPVEGHGISSVEAALIQRERLQERGLGLKDISGIDIRTTAAANLIINKTGRLHNAADRDHCIQYVIALAFIKGSPPEPEDYADDSPFATSQEIDALRDKTIIRPDEQLTRDYLDIEKKSAGAGMTIYLEDGTTMEEVLIEYPSGHMSNPKTKKLVEGKFERNMRLKFDDGEIMRIKDALNEDSMRVHEFLDLFVRKGQPGSPRL.

Belongs to the PrpD family. As to quaternary structure, monomer.

It catalyses the reaction (4E,11E)-2-hydroxytrideca-4,11-dien-1,2,3-tricarboxylate + 2 H(+) = [4-(deca-1,8-diyl)-2,5-dioxo-2,5-dihydro-3-furanyl]acetate + 2 H2O. It functions in the pathway secondary metabolite biosynthesis. Its function is as follows. Alkylcitrate dehydratase; part of the gene cluster that mediates the biosynthesis of the antihypercholesterolemic agents phomoidrides which are dimeric anhydrides. Within the pathway, the alkylcitrate synthase (ACS) phiJ and the alkylcitrate dehydratase (ACDH) phiI produce the decarboxylated monomeric anhydrides by coupling the C12-fatty acyl product from phiA with oxalacetic acid. The pathway begins with the highly reducing polyketide synthase phiA that catalyzes the formation of a C12-fatty acyl-ACP, starting from one acetate and 5 malonate units. The hydrolase phiM is involved in the release of the C12-fatty acyl chain from phiA. The alkylcitrate synthase (ACS) phiJ and the alkylcitrate dehydratase (ACDH) phiI then give rise to decarboxylated monomeric anhydrides by coupling the C12-fatty acyl chain with oxalacetic acid. The cyclase phiC is responsible for the dimerization of the monomeric anhydrides which leads to the production of prephomoidride that contains the characteristic bicyclo[4.3.1]deca-1,6-diene system of phomoidrides. Iterative oxidation catalyzed by the alpha-ketoglutarate-dependent dioxygenase phiK produced then phomoidride A. Finally, the methyltransferase phiE converts phomoidride A to phomoidride B via an acetalization reaction. The phosphatidylethanolamine-binding protein phiB and phiN are not essential for dimerization and their functions have still to be determined. In Fungal sp. (strain ATCC 74256), this protein is Alkylcitrate dehydratase phiI.